The following is a 1122-amino-acid chain: Histone deacetylase 5 (1122 aa).

The disordered stretch occupies residues 1 to 22; sequence MNSPNESDGMSGREPSLEILPR. Residue Lys-35 forms a Glycyl lysine isopeptide (Lys-Gly) (interchain with G-Cter in SUMO2) linkage. A disordered region spans residues 196–281; that stretch reads KEPTPGGLNH…KVAERRSSPL (86 aa). Over residues 247 to 258 the composition is skewed to basic and acidic residues; the sequence is DSRDDFPLRKTA. At Ser-259 the chain carries Phosphoserine; by AMPK, CaMK1, SIK1 and PKD/PRKD1. Basic and acidic residues predominate over residues 272-281; it reads KVAERRSSPL. Phosphothreonine; by PKC is present on Thr-292. Disordered regions lie at residues 302–343 and 481–504; these read GAGP…NIPT and MRTVGKLPRHRPLSRTQSSPLPQS. Positions 312–327 are enriched in low complexity; sequence NSAPGSGPSSPNSSHS. Polar residues predominate over residues 328-340; sequence TIAENGFTGSVPN. Residues 494–504 show a composition bias toward low complexity; that stretch reads SRTQSSPLPQS. Position 498 is a phosphoserine; by AMPK, CaMK1, SIK1 and PKD/PRKD1 (Ser-498). Residue Lys-533 is modified to N6-acetyllysine. The segment at 536-625 is disordered; sequence TKTGELPRQP…GPDLEEPGAG (90 aa). A compositionally biased stretch (acidic residues) spans 581-621; that stretch reads STQEDLEEEDEEEDGEEEEDCIQVKDEEGESGAEEGPDLEE. 2 positions are modified to phosphoserine: Ser-611 and Ser-661. The tract at residues 684-1028 is histone deacetylase; that stretch reads GVVYDTFMLK…VSALLSVELQ (345 aa). Residues Cys-696, Cys-698, His-704, and Cys-781 each coordinate Zn(2+). Residue His-833 is part of the active site. The Nuclear export signal motif lies at 1081 to 1122; sequence EEAETVSAMALLSVGAEQAQAAAAREHSPRPAEEPMEQEPAL. The interval 1097–1122 is disordered; sequence EQAQAAAAREHSPRPAEEPMEQEPAL. The span at 1104-1113 shows a compositional bias: basic and acidic residues; it reads AREHSPRPAE. Residue Ser-1108 is modified to Phosphoserine.

This sequence belongs to the histone deacetylase family. HD type 2 subfamily. Interacts with AHRR, BAHD1, BCOR, HDAC7, HDAC9, CTBP1, MEF2C, NCOR2, NRIP1, PHB2 and a 14-3-3 chaperone protein. Interacts with BCL6, DDIT3/CHOP, GRK5, KDM5B and MYOCD. Interacts with EP300 in the presence of TFAP2C. Interacts with ANKRA2. Interacts with CUL7 (as part of the 3M complex); negatively regulated by ANKRA2. Interacts with ZBTB7B; the interaction allows the recruitment of HDAC4 on CD8 loci for deacetylation and possible inhibition of CD8 genes expression. Interacts with RARA. Phosphorylated by AMPK, CaMK1, SIK1 and PRKD1 at Ser-259 and Ser-498. The phosphorylation is required for the export to the cytoplasm and inhibition. Phosphorylated by the PKC kinases PKN1 and PKN2, impairing nuclear import. Phosphorylated by GRK5, leading to nuclear export of HDAC5 and allowing MEF2-mediated transcription. Post-translationally, ubiquitinated. Polyubiquitination however does not lead to its degradation.

It is found in the nucleus. The protein resides in the cytoplasm. It catalyses the reaction N(6)-acetyl-L-lysyl-[histone] + H2O = L-lysyl-[histone] + acetate. In terms of biological role, responsible for the deacetylation of lysine residues on the N-terminal part of the core histones (H2A, H2B, H3 and H4). Histone deacetylation gives a tag for epigenetic repression and plays an important role in transcriptional regulation, cell cycle progression and developmental events. Histone deacetylases act via the formation of large multiprotein complexes. Involved in muscle maturation by repressing transcription of myocyte enhancer MEF2C. During muscle differentiation, it shuttles into the cytoplasm, allowing the expression of myocyte enhancer factors. Serves as a corepressor of RARA and causes its deacetylation. In association with RARA, plays a role in the repression of microRNA-10a and thereby in the inflammatory response. This Pongo abelii (Sumatran orangutan) protein is Histone deacetylase 5 (HDAC5).